The following is a 790-amino-acid chain: Lon protease (790 aa).

Positions 23 to 220 (LPIMPIFHTV…EITLIVNHQL (198 aa)) constitute a Lon N-terminal domain. An ATP-binding site is contributed by 372-379 (GPPGTGKT). The Lon proteolytic domain occupies 608–789 (ISKPGIAMGL…REVLNIALSR (182 aa)). Residues serine 695 and lysine 738 contribute to the active site.

The protein belongs to the peptidase S16 family. As to quaternary structure, homohexamer. Organized in a ring with a central cavity.

The protein localises to the cytoplasm. The catalysed reaction is Hydrolysis of proteins in presence of ATP.. ATP-dependent serine protease that mediates the selective degradation of mutant and abnormal proteins as well as certain short-lived regulatory proteins. Required for cellular homeostasis and for survival from DNA damage and developmental changes induced by stress. Degrades polypeptides processively to yield small peptide fragments that are 5 to 10 amino acids long. Binds to DNA in a double-stranded, site-specific manner. This Syntrophus aciditrophicus (strain SB) protein is Lon protease.